The following is a 323-amino-acid chain: Aldo-keto reductase family 1 member C4 (323 aa).

NADP(+) is bound by residues 20–24 and aspartate 50; that span reads GFGTY. Tyrosine 55 (proton donor) is an active-site residue. Histidine 117 contributes to the substrate binding site. NADP(+) contacts are provided by residues 166–167, glutamine 190, 216–221, and 270–280; these read SN, HSALGT, and KSYNEQRIREN.

Belongs to the aldo/keto reductase family. Monomer. Post-translationally, the N-terminus is blocked. As to expression, liver specific.

It localises to the cytoplasm. The protein localises to the cytosol. It catalyses the reaction a 3alpha-hydroxysteroid + NADP(+) = a 3-oxosteroid + NADPH + H(+). The catalysed reaction is a 3alpha-hydroxysteroid + NAD(+) = a 3-oxosteroid + NADH + H(+). The enzyme catalyses 5alpha-androstane-3alpha,17beta-diol + NADP(+) = 17beta-hydroxy-5alpha-androstan-3-one + NADPH + H(+). It carries out the reaction 5alpha-androstane-3beta,17beta-diol + NADP(+) = 17beta-hydroxy-5alpha-androstan-3-one + NADPH + H(+). It catalyses the reaction 5alpha-androstane-3alpha,17beta-diol + NAD(+) = 17beta-hydroxy-5alpha-androstan-3-one + NADH + H(+). The catalysed reaction is 17beta-estradiol + NADP(+) = estrone + NADPH + H(+). The enzyme catalyses 17beta-estradiol + NAD(+) = estrone + NADH + H(+). It carries out the reaction (20S)-hydroxypregn-4-en-3-one + NADP(+) = progesterone + NADPH + H(+). It catalyses the reaction (20S)-hydroxypregn-4-en-3-one + NAD(+) = progesterone + NADH + H(+). The catalysed reaction is androsterone + NADP(+) = 5alpha-androstan-3,17-dione + NADPH + H(+). The enzyme catalyses testosterone + NADP(+) = androst-4-ene-3,17-dione + NADPH + H(+). It carries out the reaction testosterone + NAD(+) = androst-4-ene-3,17-dione + NADH + H(+). It catalyses the reaction 3alpha-hydroxy-5alpha-androstane 17-O-(beta-D-glucuronate) + NADP(+) = 5alpha-dihydrotestosterone 17-O-(beta-D-glucuronate) + NADPH + H(+). The catalysed reaction is (3beta,5alpha,17beta)-3-hydroxy-androstan-17-yl sulfate + NADP(+) = 5alpha-dihydrotestosterone sulfate + NADPH + H(+). The enzyme catalyses 5alpha-androstane-3alpha,17beta-diol + NAD(+) = androsterone + NADH + H(+). It carries out the reaction chlordecone alcohol + NADP(+) = chlordecone + NADPH + H(+). It functions in the pathway steroid metabolism. With respect to regulation, inhibited by nonsteroidal the anti-inflammatory drugs (NSAID) flufenamic. The oxidation reaction is inhibited by low micromolar concentrations of NADPH. Its function is as follows. Cytosolic aldo-keto reductase that catalyzes the NADH and NADPH-dependent reduction of ketosteroids to hydroxysteroids. Liver specific enzyme that acts as an NAD(P)(H)-dependent 3-, 17- and 20-ketosteroid reductase on the steroid nucleus and side chain. Displays the ability to catalyze both oxidation and reduction in vitro, but most probably acts as a reductase in vivo since the oxidase activity measured in vitro is inhibited by physiological concentration of NADPH. Acts preferentially as a 3-alpha-hydroxysteroid dehydrogenase (HSD) with a subsidiary 3-beta-HSD activity. Catalyzes efficiently the transformation of the potent androgen 5-alpha-dihydrotestosterone (5alpha-DHT or 17beta-hydroxy-5alpha-androstan-3-one) into the less active form, 5-alpha-androstan-3-alpha,17-beta-diol (3-alpha-diol). Catalyzes the reduction of estrone into 17beta-estradiol but with low efficiency. Metabolizes a broad spectrum of natural and synthetic therapeutic steroid and plays an important role in metabolism of androgens, estrogens, progestereone and conjugated steroids. Catalyzes the biotransformation of the pesticide chlordecone (kepone) to its corresponding alcohol leading to increased biliary excretion of the pesticide and concomitant reduction of its neurotoxicity since bile is the major excretory route. The polypeptide is Aldo-keto reductase family 1 member C4 (AKR1C4) (Homo sapiens (Human)).